Consider the following 823-residue polypeptide: Fibroblast growth factor receptor 2 (823 aa).

Residues 1–23 form the signal peptide; that stretch reads MVSWDSGCLICLVVVTMAGLSLA. Topologically, residues 24–379 are extracellular; it reads RPSFNLVVED…EFPTSPDYLE (356 aa). Residues 27 to 128 form the Ig-like C2-type 1 domain; sequence FNLVVEDATL…DTLYFIVNVT (102 aa). An intrachain disulfide couples C65 to C110. 3 N-linked (GlcNAc...) asparagine glycosylation sites follow: N86, N126, and N148. Ig-like C2-type domains follow at residues 156 to 249 and 258 to 360; these read PYWT…YHLD and PILQ…AWLT. The interval 163 to 180 is heparin-binding; it reads KMEKRLHAVPAANTVKFR. C181 and C233 form a disulfide bridge. N230, N243, N267, N299, N320, and N333 each carry an N-linked (GlcNAc...) asparagine glycan. The cysteines at positions 280 and 344 are disulfide-linked. The chain crosses the membrane as a helical span at residues 380–400; that stretch reads IAIYCIGVFLIACMVLTVILC. Over 401 to 823 the chain is Cytoplasmic; that stretch reads RMKNTTKKPD…YQHMNGSVKT (423 aa). Position 468 is a phosphotyrosine; by autocatalysis (Y468). The 290-residue stretch at 483-772 folds into the Protein kinase domain; sequence LTLGKPLGEG…LTLTTNEEYL (290 aa). ATP contacts are provided by residues 489-497, K519, 567-569, and N573; these read LGEGCFGQV and EYA. Y588 carries the post-translational modification Phosphotyrosine; by autocatalysis. D628 serves as the catalytic Proton acceptor. A phosphotyrosine; by autocatalysis mark is found at Y658, Y659, and Y771.

The protein belongs to the protein kinase superfamily. Tyr protein kinase family. Fibroblast growth factor receptor subfamily. As to quaternary structure, monomer. Homodimer after ligand binding. Autophosphorylated. Binding of FGF family members together with heparan sulfate proteoglycan or heparin promotes receptor dimerization and autophosphorylation on tyrosine residues. Autophosphorylation occurs in trans between the two FGFR molecules present in the dimer. In terms of processing, N-glycosylated in the endoplasmic reticulum. The N-glycan chains undergo further maturation to an Endo H-resistant form in the Golgi apparatus. Post-translationally, ubiquitinated. FGFR2 is rapidly ubiquitinated after autophosphorylation, leading to internalization and degradation. Subject to degradation both in lysosomes and by the proteasome.

Its subcellular location is the cell membrane. It is found in the golgi apparatus. It localises to the cytoplasmic vesicle. It catalyses the reaction L-tyrosyl-[protein] + ATP = O-phospho-L-tyrosyl-[protein] + ADP + H(+). Present in an inactive conformation in the absence of bound ligand. Ligand binding leads to dimerization and activation by autophosphorylation on tyrosine residues. Its function is as follows. Tyrosine-protein kinase that acts as a cell-surface receptor for fibroblast growth factors and plays an essential role in the regulation of cell proliferation, differentiation, migration and apoptosis, and in the regulation of embryonic development. Required for normal embryonic patterning, limb bud development, lung morphogenesis, osteogenesis and skin development. Plays an essential role in the regulation of osteoblast differentiation, proliferation and apoptosis, and is required for normal skeleton development. Promotes cell proliferation in keratinocytes and immature osteoblasts, but promotes apoptosis in differentiated osteoblasts. Phosphorylates PLCG1, FRS2 and PAK4. Ligand binding leads to the activation of several signaling cascades. Activation of PLCG1 leads to the production of the cellular signaling molecules diacylglycerol and inositol 1,4,5-trisphosphate. Phosphorylation of FRS2 triggers recruitment of GRB2, GAB1, PIK3R1 and SOS1, and mediates activation of RAS, MAPK1/ERK2, MAPK3/ERK1 and the MAP kinase signaling pathway, as well as of the AKT1 signaling pathway. FGFR2 signaling is down-regulated by ubiquitination, internalization and degradation. Mutations that lead to constitutive kinase activation or impair normal FGFR2 maturation, internalization and degradation lead to aberrant signaling. Over-expressed FGFR2 promotes activation of STAT1. In Gallus gallus (Chicken), this protein is Fibroblast growth factor receptor 2 (FGFR2).